The sequence spans 296 residues: uncharacterized protein (296 aa).

The protein resides in the mitochondrion. This is an uncharacterized protein from Podospora anserina (strain S / ATCC MYA-4624 / DSM 980 / FGSC 10383) (Pleurage anserina).